The primary structure comprises 295 residues: GTPase Era (295 aa).

The region spanning 7–176 (KTISVCIIGR…IKSKAKVSPW (170 aa)) is the Era-type G domain. Residues 15 to 22 (GRPNSGKS) are G1. A GTP-binding site is contributed by 15 to 22 (GRPNSGKS). The tract at residues 41-45 (QTTRS) is G2. The tract at residues 62–65 (DTPG) is G3. GTP contacts are provided by residues 62–66 (DTPGI) and 124–127 (NKID). Residues 124-127 (NKID) are G4. The G5 stretch occupies residues 152-154 (ISA). One can recognise a KH type-2 domain in the interval 204–281 (LQQELPYKLT…HLFLFVKVHA (78 aa)).

Belongs to the TRAFAC class TrmE-Era-EngA-EngB-Septin-like GTPase superfamily. Era GTPase family. Monomer.

The protein localises to the cytoplasm. It localises to the cell inner membrane. Functionally, an essential GTPase that binds both GDP and GTP, with rapid nucleotide exchange. Plays a role in 16S rRNA processing and 30S ribosomal subunit biogenesis and possibly also in cell cycle regulation and energy metabolism. The protein is GTPase Era of Rickettsia typhi (strain ATCC VR-144 / Wilmington).